The following is a 318-amino-acid chain: MQRRSRGINTGLILLLSQIFHVGINNIPPVTLATLALNIWFFLNPQKPLYSSCLSVEKCYQQRDWQRLLLSPLHHADDWHLYFNTASVLWKGINLERRLGSRWFAYVITTFSVLTGVVYLLLQFAVAEFMDEPDFKRSCAVGFSGVLFALKVLNNHYCPGGFVNILGFPVPNRFACWVELVAIHLFSPGTSFAGHQAGILVGLMYTQGPLKKIMEACAGLGGFSSSVGYPGQQYYFNSSGSSGYQDYYPHGRPDHYEEAPRNYDTYTAGLSEEEQLERALQASLWDRGHTRNSPPPYGFHLSPEEEMRRQRLHRFDSQ.

Residues 1–21 are Cytoplasmic-facing; it reads MQRRSRGINTGLILLLSQIFH. The helical transmembrane segment at 22 to 42 threads the bilayer; it reads VGINNIPPVTLATLALNIWFF. The Extracellular segment spans residues 43-106; that stretch reads LNPQKPLYSS…RRLGSRWFAY (64 aa). The helical transmembrane segment at 107–127 threads the bilayer; that stretch reads VITTFSVLTGVVYLLLQFAVA. The Cytoplasmic portion of the chain corresponds to 128-137; it reads EFMDEPDFKR. Residues 138–154 traverse the membrane as a helical segment; that stretch reads SCAVGFSGVLFALKVLN. Ser144 acts as the Nucleophile in catalysis. The Extracellular portion of the chain corresponds to 155–179; the sequence is NHYCPGGFVNILGFPVPNRFACWVE. Residues 180–204 traverse the membrane as a helical segment; it reads LVAIHLFSPGTSFAGHQAGILVGLM. The active site involves His195. Topologically, residues 205–318 are cytoplasmic; sequence YTQGPLKKIM…RQRLHRFDSQ (114 aa). Residues 271-286 form a ubiquitin-binding domain (UBD) region; it reads SEEEQLERALQASLWD. The tract at residues 285 to 318 is disordered; it reads WDRGHTRNSPPPYGFHLSPEEEMRRQRLHRFDSQ. Over residues 302-318 the composition is skewed to basic and acidic residues; it reads SPEEEMRRQRLHRFDSQ. The segment at 303 to 318 is VCP/p97-interacting motif (VIM); that stretch reads PEEEMRRQRLHRFDSQ.

The protein belongs to the peptidase S54 family. In terms of assembly, interacts with BIK and STEAP3. Interacts (via C-terminal domain) with VCP. Interacts with ubiquitin and ubiquitinated proteins.

The protein localises to the endoplasmic reticulum membrane. It is found in the mitochondrion membrane. The enzyme catalyses Cleaves type-1 transmembrane domains using a catalytic dyad composed of serine and histidine that are contributed by different transmembrane domains.. With respect to regulation, inhibited by aprotinin. In terms of biological role, intramembrane-cleaving serine protease that cleaves single transmembrane or multi-pass membrane proteins in the hydrophobic plane of the membrane, luminal loops and juxtamembrane regions. Involved in regulated intramembrane proteolysis and the subsequent release of functional polypeptides from their membrane anchors. Functional component of endoplasmic reticulum-associated degradation (ERAD) for misfolded membrane proteins. Required for the degradation process of some specific misfolded endoplasmic reticulum (ER) luminal proteins. Participates in the transfer of misfolded proteins from the ER to the cytosol, where they are destroyed by the proteasome in a ubiquitin-dependent manner. Functions in BIK, MPZ, PKD1, PTCRA, RHO, STEAP3 and TRAC processing. Involved in the regulation of exosomal secretion; inhibits the TSAP6-mediated secretion pathway. Involved in the regulation of apoptosis; modulates BIK-mediated apoptotic activity. Also plays a role in the regulation of spermatogenesis; inhibits apoptotic activity in spermatogonia. In Pongo abelii (Sumatran orangutan), this protein is Rhomboid-related protein 4 (RHBDD1).